Here is a 133-residue protein sequence, read N- to C-terminus: Small ribosomal subunit protein uS8 (133 aa).

The protein belongs to the universal ribosomal protein uS8 family. In terms of assembly, part of the 30S ribosomal subunit. Contacts proteins S5 and S12.

Its function is as follows. One of the primary rRNA binding proteins, it binds directly to 16S rRNA central domain where it helps coordinate assembly of the platform of the 30S subunit. The protein is Small ribosomal subunit protein uS8 of Chloroflexus aggregans (strain MD-66 / DSM 9485).